The chain runs to 176 residues: NAD(P)H-quinone oxidoreductase subunit 6, chloroplastic (176 aa).

Helical transmembrane passes span 10 to 30 (ILLVFLGSGLILGGLGVVLLT), 32 to 52 (PISSAFSLGLVLVCISLFYIP), 61 to 81 (AQLLIYVGAINVLIVFAVMFM), 92 to 112 (LWTIGDGFTSLVCTSILFSLI), and 152 to 172 (FYLPFELISIILLVALIGAIA).

The protein belongs to the complex I subunit 6 family. As to quaternary structure, NDH is composed of at least 16 different subunits, 5 of which are encoded in the nucleus.

It localises to the plastid. Its subcellular location is the chloroplast thylakoid membrane. The enzyme catalyses a plastoquinone + NADH + (n+1) H(+)(in) = a plastoquinol + NAD(+) + n H(+)(out). It catalyses the reaction a plastoquinone + NADPH + (n+1) H(+)(in) = a plastoquinol + NADP(+) + n H(+)(out). Its function is as follows. NDH shuttles electrons from NAD(P)H:plastoquinone, via FMN and iron-sulfur (Fe-S) centers, to quinones in the photosynthetic chain and possibly in a chloroplast respiratory chain. The immediate electron acceptor for the enzyme in this species is believed to be plastoquinone. Couples the redox reaction to proton translocation, and thus conserves the redox energy in a proton gradient. This Chloranthus spicatus (Chulantree) protein is NAD(P)H-quinone oxidoreductase subunit 6, chloroplastic (ndhG).